The chain runs to 285 residues: (2Z,6Z)-farnesyl diphosphate synthase CPT6, chloroplastic (285 aa).

A chloroplast-targeting transit peptide spans 1–30; the sequence is MNSLFVGRPIVKSSYNVYTLPSSICGGHFF. D65 is an active-site residue.

This sequence belongs to the UPP synthase family. It depends on Mg(2+) as a cofactor. Expressed in roots and red fruits.

It localises to the plastid. The protein localises to the chloroplast. The enzyme catalyses 2 isopentenyl diphosphate + dimethylallyl diphosphate = (2Z,6Z)-farnesyl diphosphate + 2 diphosphate. It carries out the reaction isopentenyl diphosphate + dimethylallyl diphosphate = neryl diphosphate + diphosphate. The catalysed reaction is neryl diphosphate + isopentenyl diphosphate = (2Z,6Z)-farnesyl diphosphate + diphosphate. In terms of biological role, uses neryl diphosphate to catalyze the cis-prenyl chain elongation and produce the 15 carbon product (2Z,6Z)-farnesyl diphosphate. The chain is (2Z,6Z)-farnesyl diphosphate synthase CPT6, chloroplastic from Solanum lycopersicum (Tomato).